The following is a 99-amino-acid chain: A-type ATP synthase subunit F (99 aa).

Belongs to the V-ATPase F subunit family. As to quaternary structure, has multiple subunits with at least A(3), B(3), C, D, E, F, H, I and proteolipid K(x).

The protein resides in the cell membrane. Its function is as follows. Component of the A-type ATP synthase that produces ATP from ADP in the presence of a proton gradient across the membrane. This is A-type ATP synthase subunit F from Methanococcus aeolicus (strain ATCC BAA-1280 / DSM 17508 / OCM 812 / Nankai-3).